Reading from the N-terminus, the 346-residue chain is Protein RecA (346 aa).

67-74 serves as a coordination point for ATP; it reads GPESSGKT.

It belongs to the RecA family.

It localises to the cytoplasm. Functionally, can catalyze the hydrolysis of ATP in the presence of single-stranded DNA, the ATP-dependent uptake of single-stranded DNA by duplex DNA, and the ATP-dependent hybridization of homologous single-stranded DNAs. It interacts with LexA causing its activation and leading to its autocatalytic cleavage. In Mycobacterium ulcerans (strain Agy99), this protein is Protein RecA.